The following is a 766-amino-acid chain: Ubiquitin carboxyl-terminal hydrolase creB (766 aa).

Positions 1–32 (MGSFLKSFRKDVGSAAPSVGAPPAKKEPQPLP) are disordered. Over residues 13 to 23 (GSAAPSVGAPP) the composition is skewed to low complexity. A USP domain is found at 55 to 466 (YGMENFGNTC…CAYVLFYQET (412 aa)). The Nucleophile role is filled by Cys-64. 2 disordered regions span residues 115 to 145 (EALA…KDSP) and 243 to 266 (ESPQ…SRTP). The span at 249–263 (SDVSDSVIPSSSSGS) shows a compositional bias: low complexity. His-417 acts as the Proton acceptor in catalysis. The interval 526–752 (APTAPQLSTH…HDRSSHGKWR (227 aa)) is disordered. Residues 548–572 (SPAPDPAPLTSLPPIPPIPETPPAP) show a composition bias toward pro residues. The stretch at 573–620 (LTSRKSDLQSKKERVKEEKERKAAEKEKEKQRRKEIETRLKDRQRRED) forms a coiled coil. Basic and acidic residues-rich tracts occupy residues 576 to 643 (RKSD…RNHA) and 734 to 747 (EQEH…DRSS).

It belongs to the peptidase C19 family. Interacts with creA, creC and qutD.

The enzyme catalyses Thiol-dependent hydrolysis of ester, thioester, amide, peptide and isopeptide bonds formed by the C-terminal Gly of ubiquitin (a 76-residue protein attached to proteins as an intracellular targeting signal).. In terms of biological role, ubiquitin thioesterase component of the regulatory network controlling carbon source utilization through ubiquitination and deubiquitination involving creA, creB, creC, creD and acrB. Deubiquitinates the creA catabolic repressor and the quinate permease qutD. Also plays a role in response to carbon starvation and the control of extracellular proteases activity. This is Ubiquitin carboxyl-terminal hydrolase creB (creB) from Emericella nidulans (strain FGSC A4 / ATCC 38163 / CBS 112.46 / NRRL 194 / M139) (Aspergillus nidulans).